Reading from the N-terminus, the 424-residue chain is Glutamate-1-semialdehyde 2,1-aminomutase (424 aa).

Lysine 263 is modified (N6-(pyridoxal phosphate)lysine).

Belongs to the class-III pyridoxal-phosphate-dependent aminotransferase family. HemL subfamily. In terms of assembly, homodimer. The cofactor is pyridoxal 5'-phosphate.

The protein resides in the cytoplasm. It carries out the reaction (S)-4-amino-5-oxopentanoate = 5-aminolevulinate. It functions in the pathway porphyrin-containing compound metabolism; protoporphyrin-IX biosynthesis; 5-aminolevulinate from L-glutamyl-tRNA(Glu): step 2/2. In Campylobacter jejuni subsp. jejuni serotype O:6 (strain 81116 / NCTC 11828), this protein is Glutamate-1-semialdehyde 2,1-aminomutase.